Here is a 177-residue protein sequence, read N- to C-terminus: Small ribosomal subunit protein uS5 (177 aa).

In terms of domain architecture, S5 DRBM spans 19 to 82 (FIEKLVAIKR…DQAQKQMIKV (64 aa)).

It belongs to the universal ribosomal protein uS5 family. In terms of assembly, part of the 30S ribosomal subunit. Contacts proteins S4 and S8.

With S4 and S12 plays an important role in translational accuracy. In terms of biological role, located at the back of the 30S subunit body where it stabilizes the conformation of the head with respect to the body. In Magnetococcus marinus (strain ATCC BAA-1437 / JCM 17883 / MC-1), this protein is Small ribosomal subunit protein uS5.